The sequence spans 475 residues: Kynureninase (475 aa).

Residues L141, T142, 169 to 172 (FPSD), D254, H257, and Y279 each bind pyridoxal 5'-phosphate. An N6-(pyridoxal phosphate)lysine modification is found at K280. Pyridoxal 5'-phosphate-binding residues include W319 and N347.

The protein belongs to the kynureninase family. Homodimer. Pyridoxal 5'-phosphate is required as a cofactor.

The protein localises to the cytoplasm. It carries out the reaction L-kynurenine + H2O = anthranilate + L-alanine + H(+). The enzyme catalyses 3-hydroxy-L-kynurenine + H2O = 3-hydroxyanthranilate + L-alanine + H(+). It participates in amino-acid degradation; L-kynurenine degradation; L-alanine and anthranilate from L-kynurenine: step 1/1. It functions in the pathway cofactor biosynthesis; NAD(+) biosynthesis; quinolinate from L-kynurenine: step 2/3. Catalyzes the cleavage of L-kynurenine (L-Kyn) and L-3-hydroxykynurenine (L-3OHKyn) into anthranilic acid (AA) and 3-hydroxyanthranilic acid (3-OHAA), respectively. The polypeptide is Kynureninase (bna5) (Sclerotinia sclerotiorum (strain ATCC 18683 / 1980 / Ss-1) (White mold)).